A 558-amino-acid polypeptide reads, in one-letter code: 5-aminolevulinate synthase, mitochondrial (558 aa).

The transit peptide at 1 to 25 (MERVVKLAAKHCPFVSKADPSALRR) directs the protein to the mitochondrion. Residues 103-124 (TTTPVTKKHQMPKHYASDLNGV) form a disordered region. Positions 152, 265, and 284 each coordinate substrate. Pyridoxal 5'-phosphate-binding residues include S317, H345, and T374. The active site involves K377. The residue at position 377 (K377) is an N6-(pyridoxal phosphate)lysine. Residues T406 and T407 each coordinate pyridoxal 5'-phosphate. Substrate is bound at residue T492.

Belongs to the class-II pyridoxal-phosphate-dependent aminotransferase family. In terms of assembly, homodimer. Pyridoxal 5'-phosphate serves as cofactor.

It localises to the mitochondrion matrix. It catalyses the reaction succinyl-CoA + glycine + H(+) = 5-aminolevulinate + CO2 + CoA. It participates in porphyrin-containing compound metabolism; protoporphyrin-IX biosynthesis; 5-aminolevulinate from glycine: step 1/1. Catalyzes the synthesis of 5-aminolevulinate (ALA) from succinyl-CoA and glycine, the first and rate-limiting step in heme biosynthesis. The chain is 5-aminolevulinate synthase, mitochondrial from Schizosaccharomyces pombe (strain 972 / ATCC 24843) (Fission yeast).